The chain runs to 61 residues: Putative defensin-like protein 72 (61 aa).

Disulfide bonds link Cys21/Cys59, Cys25/Cys48, Cys34/Cys57, and Cys38/Cys58.

It belongs to the DEFL family.

This Arabidopsis thaliana (Mouse-ear cress) protein is Putative defensin-like protein 72.